We begin with the raw amino-acid sequence, 127 residues long: Holo-[acyl-carrier-protein] synthase (127 aa).

2 residues coordinate Mg(2+): aspartate 9 and glutamate 58.

This sequence belongs to the P-Pant transferase superfamily. AcpS family. The cofactor is Mg(2+).

The protein localises to the cytoplasm. It carries out the reaction apo-[ACP] + CoA = holo-[ACP] + adenosine 3',5'-bisphosphate + H(+). Functionally, transfers the 4'-phosphopantetheine moiety from coenzyme A to a Ser of acyl-carrier-protein. In Shewanella baltica (strain OS223), this protein is Holo-[acyl-carrier-protein] synthase.